The primary structure comprises 97 residues: RxLR effector protein PexRD21 (97 aa).

Positions 1–21 (MRLSYILVVVIAVTLQACVCA) are cleaved as a signal peptide. Residues 48–66 (RLLRGVKKRTAEREVQEER) carry the RxLR-dEER motif.

The protein belongs to the RxLR effector family.

It is found in the secreted. The protein localises to the host cell membrane. In terms of biological role, effector that is involved in host plant infection. Contributes to virulence during the early infection stage, by inhibiting plant defense responses induced by both PAMP-triggered immunity (PTI) and effector-triggered immunity (ETI). This is RxLR effector protein PexRD21 from Phytophthora infestans (strain T30-4) (Potato late blight agent).